Reading from the N-terminus, the 552-residue chain is MTELSIRPEEIRDALREYVDSFQATSAGREEVGRVVVTGDGIARVEGLPHTMTNELLEFSGGVLGLALNLEIGEIGTVILGEAEHIEEGQEVRRTGEILAVPVGDGFLGRVVDPLGRPIDGLGEIQAEGTRALELQAPTVVQRQPVKEPLQTGIKAIDAMTAIGRGQRQLIIGDRQTGKTTVAIDTIINQRDNWASGDPSKQVKCVYVAIGQKKSTIREVVNTLEEAGALAYTTVVAAPADEPAGFKYIAPYAGSAIAQHWMYNGQHALIVFDDLSKQAEAYRAISLLLRRPPGREAYPGDVFYLHSRLLERCAKLSDELGGGSLTGLPIIETKASDISAYIPTNVISITDGQIFLESDLFNQGVRPAINVGTSVSRVGGSAQTKAMKSVAGRLRLDLAQYRELEAFSAFGSDLDKASRDQLARGARLVELLKQPQNQPYPIERQVVSIWAGTTGKVDDVPVADVRRFESEFLDYVGRSHRGIYDAILGSGKLGDDVIQELNSAIAAFKNQFTLSDGKPLVNEAAASPLDPSAVRKESIPVHRAPARTDDEG.

Residue 173–180 coordinates ATP; sequence GDRQTGKT. The segment at 526 to 552 is disordered; sequence ASPLDPSAVRKESIPVHRAPARTDDEG. Basic and acidic residues predominate over residues 533–552; it reads AVRKESIPVHRAPARTDDEG.

This sequence belongs to the ATPase alpha/beta chains family. As to quaternary structure, F-type ATPases have 2 components, CF(1) - the catalytic core - and CF(0) - the membrane proton channel. CF(1) has five subunits: alpha(3), beta(3), gamma(1), delta(1), epsilon(1). CF(0) has three main subunits: a(1), b(2) and c(9-12). The alpha and beta chains form an alternating ring which encloses part of the gamma chain. CF(1) is attached to CF(0) by a central stalk formed by the gamma and epsilon chains, while a peripheral stalk is formed by the delta and b chains.

It localises to the cell membrane. The enzyme catalyses ATP + H2O + 4 H(+)(in) = ADP + phosphate + 5 H(+)(out). In terms of biological role, produces ATP from ADP in the presence of a proton gradient across the membrane. The alpha chain is a regulatory subunit. This chain is ATP synthase subunit alpha, found in Frankia alni (strain DSM 45986 / CECT 9034 / ACN14a).